The following is a 144-amino-acid chain: Transcription antitermination protein NusB (144 aa).

This sequence belongs to the NusB family.

In terms of biological role, involved in transcription antitermination. Required for transcription of ribosomal RNA (rRNA) genes. Binds specifically to the boxA antiterminator sequence of the ribosomal RNA (rrn) operons. This Pelotomaculum thermopropionicum (strain DSM 13744 / JCM 10971 / SI) protein is Transcription antitermination protein NusB.